The following is a 160-amino-acid chain: FMRFamide-like neuropeptides 13 (160 aa).

An N-terminal signal peptide occupies residues 1–17 (MMTSLLTISMFVVAIQA). Positions 18 to 43 (FDSSEIRMLDEQYDTKNPFFQFLENS) are excised as a propeptide. Residues F60, F73, F85, F98, F110, F123, F135, F146, and F157 each carry the phenylalanine amide modification.

It belongs to the FARP (FMRFamide related peptide) family. As to expression, expressed in the ASE sensory neurons, the DD motor neurons, the 15, M3 and M5 cholinergic pharyngeal motoneurons, and the ASG, ASK and BAG neurons.

It localises to the secreted. Functionally, probable FMRFamide-like neuropeptides. Binds to neuronal receptors such as dmsr-1 to promote sleep in response to cellular stress also known as stress-induced sleep (SIS). Plays a role in behaviors associated with SIS, acting in concert with the FMRFamide related peptide, flp-24 and neuropeptide-like protein nlp-8. Its function is as follows. AADGAPLIRF-amide: Inhibits muscle tension in somatic muscle. Acts as a ligand for the npr-22 receptor in vitro. Acts as a ligand for isoform a of the dmsr-1 G-protein coupled receptor in vitro. In terms of biological role, APEASPFIRF-amide: Inhibits muscle tension in somatic muscle. Potent inhibitor of the activity of the dissected pharyngeal myogenic muscle system. Acts as a ligand for isoform a of the dmsr-1 G-protein coupled receptor in vitro. Acts as a ligand for the npr-22 receptor in vitro. Acts as a ligand for isoform a of the dmsr-1 G-protein coupled receptor in vitro. Functionally, acts as a ligand for isoform a of the dmsr-1 G-protein coupled receptor in vitro. The sequence is that of FMRFamide-like neuropeptides 13 from Caenorhabditis elegans.